The following is a 192-amino-acid chain: NADH-quinone oxidoreductase subunit B 1 (192 aa).

Residues C71, C72, C136, and C166 each coordinate [4Fe-4S] cluster.

It belongs to the complex I 20 kDa subunit family. In terms of assembly, NDH-1 is composed of 14 different subunits. Subunits NuoB, C, D, E, F, and G constitute the peripheral sector of the complex. Requires [4Fe-4S] cluster as cofactor.

Its subcellular location is the cell inner membrane. It carries out the reaction a quinone + NADH + 5 H(+)(in) = a quinol + NAD(+) + 4 H(+)(out). Functionally, NDH-1 shuttles electrons from NADH, via FMN and iron-sulfur (Fe-S) centers, to quinones in the respiratory chain. The immediate electron acceptor for the enzyme in this species is believed to be ubiquinone. Couples the redox reaction to proton translocation (for every two electrons transferred, four hydrogen ions are translocated across the cytoplasmic membrane), and thus conserves the redox energy in a proton gradient. The chain is NADH-quinone oxidoreductase subunit B 1 from Rhizobium meliloti (strain 1021) (Ensifer meliloti).